Here is a 396-residue protein sequence, read N- to C-terminus: Phosphopentomutase (396 aa).

Residues Asp13, Asp288, His293, Asp329, His330, and His341 each coordinate Mn(2+).

The protein belongs to the phosphopentomutase family. Mn(2+) is required as a cofactor.

It is found in the cytoplasm. The enzyme catalyses 2-deoxy-alpha-D-ribose 1-phosphate = 2-deoxy-D-ribose 5-phosphate. The catalysed reaction is alpha-D-ribose 1-phosphate = D-ribose 5-phosphate. It functions in the pathway carbohydrate degradation; 2-deoxy-D-ribose 1-phosphate degradation; D-glyceraldehyde 3-phosphate and acetaldehyde from 2-deoxy-alpha-D-ribose 1-phosphate: step 1/2. Its function is as follows. Isomerase that catalyzes the conversion of deoxy-ribose 1-phosphate (dRib-1-P) and ribose 1-phosphate (Rib-1-P) to deoxy-ribose 5-phosphate (dRib-5-P) and ribose 5-phosphate (Rib-5-P), respectively. The sequence is that of Phosphopentomutase from Clostridium botulinum (strain Alaska E43 / Type E3).